The chain runs to 370 residues: Anhydro-N-acetylmuramic acid kinase (370 aa).

13–20 contacts ATP; it reads GTSLDGVD.

This sequence belongs to the anhydro-N-acetylmuramic acid kinase family.

The catalysed reaction is 1,6-anhydro-N-acetyl-beta-muramate + ATP + H2O = N-acetyl-D-muramate 6-phosphate + ADP + H(+). It participates in amino-sugar metabolism; 1,6-anhydro-N-acetylmuramate degradation. It functions in the pathway cell wall biogenesis; peptidoglycan recycling. Catalyzes the specific phosphorylation of 1,6-anhydro-N-acetylmuramic acid (anhMurNAc) with the simultaneous cleavage of the 1,6-anhydro ring, generating MurNAc-6-P. Is required for the utilization of anhMurNAc either imported from the medium or derived from its own cell wall murein, and thus plays a role in cell wall recycling. The chain is Anhydro-N-acetylmuramic acid kinase from Vibrio cholerae serotype O1 (strain ATCC 39315 / El Tor Inaba N16961).